Consider the following 595-residue polypeptide: Aspartate--tRNA ligase (595 aa).

Position 173 (Glu173) interacts with L-aspartate. The aspartate stretch occupies residues 197–200; that stretch reads QLFK. Residue Arg219 participates in L-aspartate binding. ATP contacts are provided by residues 219-221 and Gln228; that span reads RDE. His449 provides a ligand contact to L-aspartate. Residue Glu483 coordinates ATP. Residue Arg490 coordinates L-aspartate. 535–538 provides a ligand contact to ATP; it reads GLDR.

The protein belongs to the class-II aminoacyl-tRNA synthetase family. Type 1 subfamily. Homodimer.

Its subcellular location is the cytoplasm. It catalyses the reaction tRNA(Asp) + L-aspartate + ATP = L-aspartyl-tRNA(Asp) + AMP + diphosphate. Its function is as follows. Catalyzes the attachment of L-aspartate to tRNA(Asp) in a two-step reaction: L-aspartate is first activated by ATP to form Asp-AMP and then transferred to the acceptor end of tRNA(Asp). This chain is Aspartate--tRNA ligase, found in Shewanella sediminis (strain HAW-EB3).